A 419-amino-acid chain; its full sequence is Inner ear-specific collagen (419 aa).

The first 19 residues, 1-19 (MDAYSLSPTDSTTYSSDTF), serve as a signal peptide directing secretion. Residues 20 to 57 (STEFHTDAIAPPGNTPGNYTLDYNECFFNFCECCPPEK) are nonhelical region (NC2). Asn-37 carries N-linked (GlcNAc...) asparagine glycosylation. Positions 58-274 (GPMGPMGERG…RGPKGPPGES (217 aa)) are triple-helical region (COL1). A disordered region spans residues 63–275 (MGERGLPGPP…GPKGPPGESV (213 aa)). Composition is skewed to basic and acidic residues over residues 129 to 144 (PGEKGDPGLKGDKGER) and 184 to 202 (LKGEQGLKGECLQGEKGER). Gly residues predominate over residues 227–236 (GPLGGKGDTG). One can recognise a C1q domain in the interval 275–412 (VEQIRSAFSV…GFLLYPDTKK (138 aa)). The interval 275 to 419 (VEQIRSAFSV…TKKPTAMENL (145 aa)) is nonhelical region (NC1). Asn-320 carries N-linked (GlcNAc...) asparagine glycosylation.

Specialized secretory supporting cells at the outer perimeter of the saccular epithelium.

The protein resides in the secreted. It is found in the extracellular space. Its subcellular location is the extracellular matrix. Forms a microstructural matrix within the otolithic membrane. The protein is Inner ear-specific collagen of Lepomis macrochirus (Bluegill).